The following is a 233-amino-acid chain: Large ribosomal subunit protein uL1 (233 aa).

It belongs to the universal ribosomal protein uL1 family. In terms of assembly, part of the 50S ribosomal subunit.

Functionally, binds directly to 23S rRNA. The L1 stalk is quite mobile in the ribosome, and is involved in E site tRNA release. Its function is as follows. Protein L1 is also a translational repressor protein, it controls the translation of the L11 operon by binding to its mRNA. The protein is Large ribosomal subunit protein uL1 of Geobacillus stearothermophilus (Bacillus stearothermophilus).